Consider the following 454-residue polypeptide: MTNRTCLAVILAAGEGTRMKSTLPKVLHKIGGLEMVGHVMNAASSAGADALALVVGNGAEQVRAFAEKQTADRRDIFVQEERLGTAHAVLAAREAMSRGYDDVLVVFGDHPLLDPSVLLSAREKLAEGAAVAVLGFRPPVPTGYGRLIEKEGRLVAIREEKDCSEEERKITFCNSGVMAIAGKHALALIDQVKNENAKGEYYLTDIVEIANRQGLLVVASEAGRESAVGINNRAELAEAEAVWQQKRRRELMLSGVTLIAPETVFLSYDTQIGPDTVIEPNVWFGPGVRIASGAHIHAFSHIEEAVVETGATVGPFARLRPGAQVQEKAKIGNFCEIKNARIEPGAKVPHLSYIGDATVGAGANIGAGTITCNYDGFLKHHTEIGAGAFIGTNSALVAPVTIGAGAYVASGSVLTEDVPADALAFGRARQATYEGRGKVLRDKLAEEKAKKSGG.

Positions 1-233 (MTNRTCLAVI…RESAVGINNR (233 aa)) are pyrophosphorylase. UDP-N-acetyl-alpha-D-glucosamine contacts are provided by residues 11 to 14 (LAAG), Lys25, Gln79, and 84 to 85 (GT). A Mg(2+)-binding site is contributed by Asp109. Residues Gly145, Glu159, Asn174, and Asn231 each coordinate UDP-N-acetyl-alpha-D-glucosamine. A Mg(2+)-binding site is contributed by Asn231. A linker region spans residues 234–254 (AELAEAEAVWQQKRRRELMLS). Residues 255–454 (GVTLIAPETV…AEEKAKKSGG (200 aa)) are N-acetyltransferase. Positions 320 and 338 each coordinate UDP-N-acetyl-alpha-D-glucosamine. His350 acts as the Proton acceptor in catalysis. Residues Tyr353 and Asn364 each coordinate UDP-N-acetyl-alpha-D-glucosamine. Acetyl-CoA contacts are provided by residues Ala367, 373–374 (NY), Ser410, and Arg427.

The protein in the N-terminal section; belongs to the N-acetylglucosamine-1-phosphate uridyltransferase family. It in the C-terminal section; belongs to the transferase hexapeptide repeat family. Homotrimer. Mg(2+) is required as a cofactor.

It is found in the cytoplasm. It carries out the reaction alpha-D-glucosamine 1-phosphate + acetyl-CoA = N-acetyl-alpha-D-glucosamine 1-phosphate + CoA + H(+). It catalyses the reaction N-acetyl-alpha-D-glucosamine 1-phosphate + UTP + H(+) = UDP-N-acetyl-alpha-D-glucosamine + diphosphate. The protein operates within nucleotide-sugar biosynthesis; UDP-N-acetyl-alpha-D-glucosamine biosynthesis; N-acetyl-alpha-D-glucosamine 1-phosphate from alpha-D-glucosamine 6-phosphate (route II): step 2/2. It participates in nucleotide-sugar biosynthesis; UDP-N-acetyl-alpha-D-glucosamine biosynthesis; UDP-N-acetyl-alpha-D-glucosamine from N-acetyl-alpha-D-glucosamine 1-phosphate: step 1/1. It functions in the pathway bacterial outer membrane biogenesis; LPS lipid A biosynthesis. In terms of biological role, catalyzes the last two sequential reactions in the de novo biosynthetic pathway for UDP-N-acetylglucosamine (UDP-GlcNAc). The C-terminal domain catalyzes the transfer of acetyl group from acetyl coenzyme A to glucosamine-1-phosphate (GlcN-1-P) to produce N-acetylglucosamine-1-phosphate (GlcNAc-1-P), which is converted into UDP-GlcNAc by the transfer of uridine 5-monophosphate (from uridine 5-triphosphate), a reaction catalyzed by the N-terminal domain. In Chelativorans sp. (strain BNC1), this protein is Bifunctional protein GlmU.